Reading from the N-terminus, the 213-residue chain is Thymidylate kinase (213 aa).

10 to 17 contributes to the ATP binding site; the sequence is GLEGAGKT.

Belongs to the thymidylate kinase family.

It catalyses the reaction dTMP + ATP = dTDP + ADP. In terms of biological role, phosphorylation of dTMP to form dTDP in both de novo and salvage pathways of dTTP synthesis. The chain is Thymidylate kinase from Klebsiella pneumoniae subsp. pneumoniae (strain ATCC 700721 / MGH 78578).